The following is a 701-amino-acid chain: T-cell immunomodulatory protein homolog (701 aa).

Residues 1-29 form the signal peptide; sequence MVKCGKYVLILELLLLTLLYNLIKRVSNS. The Extracellular portion of the chain corresponds to 30–657; that stretch reads GETVSSFVDG…IQLSVNPSNK (628 aa). N148, N180, N217, N258, N458, N522, and N571 each carry an N-linked (GlcNAc...) asparagine glycan. The chain crosses the membrane as a helical span at residues 658–678; it reads FYSIIYITLICLSVIGVLIFI. At 679-701 the chain is on the cytoplasmic side; it reads LDRKEKIEDSKEEMGFKSHFVIG.

This sequence belongs to the TIP family.

Its subcellular location is the membrane. May protect the parasite against attack by the host immune system by immunomodulation. This chain is T-cell immunomodulatory protein homolog, found in Plasmodium yoelii yoelii.